The chain runs to 632 residues: DNA ligase (632 aa).

NAD(+) is bound by residues 45 to 49 (NEDYD) and 89 to 90 (SI). The active-site N6-AMP-lysine intermediate is Lys-127. NAD(+)-binding residues include Arg-143, Glu-174, and Lys-286. Residues Cys-374, Cys-377, Cys-390, and Cys-396 each coordinate Zn(2+). Positions 561-632 (DKRIVFTGKM…EADYLSKITM (72 aa)) constitute a BRCT domain.

This sequence belongs to the NAD-dependent DNA ligase family. LigA subfamily. Requires Mg(2+) as cofactor. The cofactor is Mn(2+).

It catalyses the reaction NAD(+) + (deoxyribonucleotide)n-3'-hydroxyl + 5'-phospho-(deoxyribonucleotide)m = (deoxyribonucleotide)n+m + AMP + beta-nicotinamide D-nucleotide.. In terms of biological role, DNA ligase that catalyzes the formation of phosphodiester linkages between 5'-phosphoryl and 3'-hydroxyl groups in double-stranded DNA using NAD as a coenzyme and as the energy source for the reaction. It is essential for DNA replication and repair of damaged DNA. The sequence is that of DNA ligase from Vesicomyosocius okutanii subsp. Calyptogena okutanii (strain HA).